The sequence spans 501 residues: NAD(P)H-quinone oxidoreductase chain 4, chloroplastic (501 aa).

The next 14 membrane-spanning stretches (helical) occupy residues 5–25, 38–58, 85–105, 112–130, 135–155, 168–188, 209–229, 243–263, 275–295, 306–326, 331–351, 387–407, 417–437, and 463–483; these read FPWLTIIVLLPIFAGSLIFFL, ICICSLELLLTTYTFCYHFQL, GLSIGPILLTGFITTLATLAA, SRLFHFLMLAMYSGQIGSF, LLLFFIMWELELIPVYLLLAM, FILYTAGGSIFLLIGVLGIGL, ALEIILYIGFLIAFSVKLPII, HYSTCMLLAGILLKMGAYGLV, SIFSPWLIIVGAIQIIYAALT, IAYSSVSHMGFIIIGIGSITD, GAILQIISHGFIGAALFFLAG, LALPGMSGFLAELIVFFGIIT, ILITFVMAIGMILTPIYLLSM, and LFVSISILLPIIAIGIYPDFV.

It belongs to the complex I subunit 4 family.

It localises to the plastid. Its subcellular location is the chloroplast thylakoid membrane. The enzyme catalyses a plastoquinone + NADH + (n+1) H(+)(in) = a plastoquinol + NAD(+) + n H(+)(out). The catalysed reaction is a plastoquinone + NADPH + (n+1) H(+)(in) = a plastoquinol + NADP(+) + n H(+)(out). This Eucalyptus globulus subsp. globulus (Tasmanian blue gum) protein is NAD(P)H-quinone oxidoreductase chain 4, chloroplastic.